A 298-amino-acid polypeptide reads, in one-letter code: MTDASHISPLEQARILSEALPHMQRYDEETIVIKYGGHAMGAEETAKAFARDIVLLEQTAINPVVVHGGGPQIATMLKRLGIKSEFAAGLRITDAATIEIVEMVLAGSINKQLVGYINEAGGKAVGLCGKDGNMVTACKATRTTVDPDSRIEEVIDLGFVGEPEKVDLTLLNQLIGHELIPVLAPLATSATGQTFNVNADTFAGAVAGALKAKRLLLLTDVPGVLDKSKQLIPELSVKDARRLIADGTISGGMIPKVETCIYALEQGVEGVVIIDGKTPHAVLLELFTNQGTGTLIHK.

Residues 69–70, R91, and N196 contribute to the substrate site; that span reads GG.

It belongs to the acetylglutamate kinase family. ArgB subfamily.

The protein localises to the cytoplasm. The enzyme catalyses N-acetyl-L-glutamate + ATP = N-acetyl-L-glutamyl 5-phosphate + ADP. It functions in the pathway amino-acid biosynthesis; L-arginine biosynthesis; N(2)-acetyl-L-ornithine from L-glutamate: step 2/4. Functionally, catalyzes the ATP-dependent phosphorylation of N-acetyl-L-glutamate. The chain is Acetylglutamate kinase from Rhodopseudomonas palustris (strain BisA53).